The chain runs to 283 residues: Dihydropteroate synthase type-1 (283 aa).

In terms of domain architecture, Pterin-binding spans 6-262; it reads VTVFGILNLT…APGDLRSAIT (257 aa). Asn-13 contributes to the Mg(2+) binding site. (7,8-dihydropterin-6-yl)methyl diphosphate is bound by residues Asp-86, Asn-105, Asp-177, Lys-216, and 250 to 252; that span reads RTH.

It belongs to the DHPS family. As to quaternary structure, homodimer or homotrimer. Mg(2+) is required as a cofactor.

The enzyme catalyses (7,8-dihydropterin-6-yl)methyl diphosphate + 4-aminobenzoate = 7,8-dihydropteroate + diphosphate. Its pathway is cofactor biosynthesis; tetrahydrofolate biosynthesis; 7,8-dihydrofolate from 2-amino-4-hydroxy-6-hydroxymethyl-7,8-dihydropteridine diphosphate and 4-aminobenzoate: step 1/2. Functionally, catalyzes the condensation of para-aminobenzoate (pABA) with 6-hydroxymethyl-7,8-dihydropterin diphosphate (DHPt-PP) to form 7,8-dihydropteroate (H2Pte), the immediate precursor of folate derivatives. Implicated in resistance to sulfonamide. The sequence is that of Dihydropteroate synthase type-1 (sulI) from Mycolicibacterium fortuitum (Mycobacterium fortuitum).